Reading from the N-terminus, the 400-residue chain is Elongation factor Tu (400 aa).

The region spanning 10–208 is the tr-type G domain; that stretch reads KPHLNVGTIG…TMDSYFPEPQ (199 aa). Residues 19–26 form a G1 region; it reads GHIDHGKT. 19–26 contacts GTP; the sequence is GHIDHGKT. Position 26 (Thr-26) interacts with Mg(2+). The tract at residues 60-64 is G2; it reads GITIN. Residues 81-84 are G3; that stretch reads DCPG. GTP contacts are provided by residues 81–85 and 136–139; these read DCPGH and NKTD. Residues 136-139 form a G4 region; the sequence is NKTD. The G5 stretch occupies residues 174–176; that stretch reads SAL.

It belongs to the TRAFAC class translation factor GTPase superfamily. Classic translation factor GTPase family. EF-Tu/EF-1A subfamily. As to quaternary structure, monomer.

It is found in the cytoplasm. It catalyses the reaction GTP + H2O = GDP + phosphate + H(+). Functionally, GTP hydrolase that promotes the GTP-dependent binding of aminoacyl-tRNA to the A-site of ribosomes during protein biosynthesis. In Thermosipho africanus (strain TCF52B), this protein is Elongation factor Tu.